The chain runs to 448 residues: N-succinylarginine dihydrolase (448 aa).

Residues 19–28 (GGLSYGNVAS), asparagine 110, and 137–138 (HR) contribute to the substrate site. The active site involves glutamate 174. Residue arginine 214 participates in substrate binding. Histidine 250 is a catalytic residue. 2 residues coordinate substrate: aspartate 252 and asparagine 365. The active-site Nucleophile is cysteine 371.

It belongs to the succinylarginine dihydrolase family. As to quaternary structure, homodimer.

It catalyses the reaction N(2)-succinyl-L-arginine + 2 H2O + 2 H(+) = N(2)-succinyl-L-ornithine + 2 NH4(+) + CO2. Its pathway is amino-acid degradation; L-arginine degradation via AST pathway; L-glutamate and succinate from L-arginine: step 2/5. Its function is as follows. Catalyzes the hydrolysis of N(2)-succinylarginine into N(2)-succinylornithine, ammonia and CO(2). The chain is N-succinylarginine dihydrolase from Pseudomonas fluorescens (strain ATCC BAA-477 / NRRL B-23932 / Pf-5).